The primary structure comprises 392 residues: Tyrosine--tRNA ligase (392 aa).

Residues 39-48 carry the 'HIGH' region motif; it reads PTAPDIHIGH. Positions 223 to 227 match the 'KMSKS' region motif; it reads KMSKS. ATP is bound at residue K226. Positions 331-391 constitute an S4 RNA-binding domain; that stretch reads IGIAQLLKQA…GKRRFARVVL (61 aa).

The protein belongs to the class-I aminoacyl-tRNA synthetase family. TyrS type 2 subfamily. Homodimer.

Its subcellular location is the cytoplasm. The catalysed reaction is tRNA(Tyr) + L-tyrosine + ATP = L-tyrosyl-tRNA(Tyr) + AMP + diphosphate + H(+). Its function is as follows. Catalyzes the attachment of tyrosine to tRNA(Tyr) in a two-step reaction: tyrosine is first activated by ATP to form Tyr-AMP and then transferred to the acceptor end of tRNA(Tyr). The polypeptide is Tyrosine--tRNA ligase (Ralstonia nicotianae (strain ATCC BAA-1114 / GMI1000) (Ralstonia solanacearum)).